The following is a 66-amino-acid chain: Cell division protein FtsB (66 aa).

Residues Met-1–Met-3 lie on the Cytoplasmic side of the membrane. A helical transmembrane segment spans residues Leu-4–Ile-21. The Extracellular segment spans residues Gly-22–Asn-66. Residues Val-38–Asn-66 adopt a coiled-coil conformation.

Belongs to the FtsB family.

Its subcellular location is the cell membrane. Essential cell division protein. May link together the upstream cell division proteins, which are predominantly cytoplasmic, with the downstream cell division proteins, which are predominantly extracellular. This Buchnera aphidicola subsp. Schizaphis graminum (strain Sg) protein is Cell division protein FtsB.